A 365-amino-acid polypeptide reads, in one-letter code: UDP-N-acetylglucosamine--N-acetylmuramyl-(pentapeptide) pyrophosphoryl-undecaprenol N-acetylglucosamine transferase (365 aa).

Residues 10–12, Asn-124, Arg-161, Ser-195, Ile-248, and Gln-292 contribute to the UDP-N-acetyl-alpha-D-glucosamine site; that span reads TAG.

Belongs to the glycosyltransferase 28 family. MurG subfamily.

The protein resides in the cell membrane. The enzyme catalyses di-trans,octa-cis-undecaprenyl diphospho-N-acetyl-alpha-D-muramoyl-L-alanyl-D-glutamyl-meso-2,6-diaminopimeloyl-D-alanyl-D-alanine + UDP-N-acetyl-alpha-D-glucosamine = di-trans,octa-cis-undecaprenyl diphospho-[N-acetyl-alpha-D-glucosaminyl-(1-&gt;4)]-N-acetyl-alpha-D-muramoyl-L-alanyl-D-glutamyl-meso-2,6-diaminopimeloyl-D-alanyl-D-alanine + UDP + H(+). It functions in the pathway cell wall biogenesis; peptidoglycan biosynthesis. Functionally, cell wall formation. Catalyzes the transfer of a GlcNAc subunit on undecaprenyl-pyrophosphoryl-MurNAc-pentapeptide (lipid intermediate I) to form undecaprenyl-pyrophosphoryl-MurNAc-(pentapeptide)GlcNAc (lipid intermediate II). This chain is UDP-N-acetylglucosamine--N-acetylmuramyl-(pentapeptide) pyrophosphoryl-undecaprenol N-acetylglucosamine transferase, found in Nocardioides sp. (strain ATCC BAA-499 / JS614).